Reading from the N-terminus, the 1000-residue chain is UPF0182 protein SCO5204 (1000 aa).

7 helical membrane passes run 26–48 (LLLTLGVLAVLAMAFTMFAGFWT), 70–92 (IGLFFVFGLLMALAVGFNIWLAH), 121–143 (WLLLGITALVGLIAGASASGQWR), 177–199 (FLLGFGFAAVIISVIAAALTHYL), 220–237 (LSVLLGVFVALKAVAYWL), 267–289 (LPAKTILFCIAVICALLFFATLW), and 296–318 (PVIGFGLMVLSAILIGGLYPALV). Disordered stretches follow at residues 884 to 908 (AETEQPPDEGDDTTEPPPTSTNPTV) and 943 to 1000 (EALQ…ADTG). Residues 888-897 (QPPDEGDDTT) are compositionally biased toward acidic residues. Basic and acidic residues-rich tracts occupy residues 943–953 (EALQRAEDAQA) and 963–984 (NGDDKNAGDKNSGDKAGSDKAG).

Belongs to the UPF0182 family.

The protein resides in the cell membrane. This Streptomyces coelicolor (strain ATCC BAA-471 / A3(2) / M145) protein is UPF0182 protein SCO5204.